Consider the following 62-residue polypeptide: UPF0339 protein Atu0232 (62 aa).

This sequence belongs to the UPF0339 family.

The sequence is that of UPF0339 protein Atu0232 from Agrobacterium fabrum (strain C58 / ATCC 33970) (Agrobacterium tumefaciens (strain C58)).